The following is a 177-amino-acid chain: Large ribosomal subunit protein uL6 (177 aa).

This sequence belongs to the universal ribosomal protein uL6 family. In terms of assembly, part of the 50S ribosomal subunit.

In terms of biological role, this protein binds to the 23S rRNA, and is important in its secondary structure. It is located near the subunit interface in the base of the L7/L12 stalk, and near the tRNA binding site of the peptidyltransferase center. In Methylibium petroleiphilum (strain ATCC BAA-1232 / LMG 22953 / PM1), this protein is Large ribosomal subunit protein uL6.